Here is a 283-residue protein sequence, read N- to C-terminus: MKIKKKYCGHVIIVGKANVGKSTLLNNIIGKKISIVSRKKNTTQSNITGIKTEDNYQSIYIDTPGVVFDKNNNQMKHHKNNFYQTTQIATLIIFIIDRIDWTIHDEIILNEIKKTKIPILIIINKIDKISNKIILLPFINFLKKKIDFIEILPISAKKISNLILLKNIIKSYLPENCHIYPECYITTNSDFFTVSEIIREQLILFLGDELPSIIKVEIESFKKKEKIALYIKAIIWVKNVRQKSIVIGHNGEKIKKISMISRNNIEKKFYIKTHLVLWVKDKN.

In terms of domain architecture, Era-type G spans Tyr-7–Glu-175. The tract at residues Gly-15–Ser-22 is G1. Gly-15–Ser-22 provides a ligand contact to GTP. The G2 stretch occupies residues Asn-41 to Ser-45. Residues Asp-62 to Gly-65 form a G3 region. Residues Asp-62–Val-66 and Asn-124–Asp-127 contribute to the GTP site. A G4 region spans residues Asn-124–Asp-127. Residues Ile-154 to Ala-156 form a G5 region. Residues Ile-198–Asn-283 form the KH type-2 domain.

Belongs to the TRAFAC class TrmE-Era-EngA-EngB-Septin-like GTPase superfamily. Era GTPase family. As to quaternary structure, monomer.

It localises to the cytoplasm. Its subcellular location is the cell membrane. An essential GTPase that binds both GDP and GTP, with rapid nucleotide exchange. Plays a role in 16S rRNA processing and 30S ribosomal subunit biogenesis and possibly also in cell cycle regulation and energy metabolism. This chain is GTPase Era, found in Buchnera aphidicola subsp. Acyrthosiphon pisum (strain APS) (Acyrthosiphon pisum symbiotic bacterium).